A 181-amino-acid chain; its full sequence is Adenylate kinase (181 aa).

Residue 10 to 15 (GAGKGT) participates in ATP binding. The NMP stretch occupies residues 30-59 (STGDLFRDNITNETELGVEAKRYLDAGDLV). AMP contacts are provided by residues threonine 31, arginine 36, 57-59 (DLV), 85-88 (GYPR), and glutamine 92. Positions 126–132 (GRGRADD) are LID. Arginine 127 contacts ATP. Residues arginine 129 and arginine 140 each contribute to the AMP site. ATP is bound at residue glycine 166.

This sequence belongs to the adenylate kinase family. As to quaternary structure, monomer.

The protein resides in the cytoplasm. It carries out the reaction AMP + ATP = 2 ADP. The protein operates within purine metabolism; AMP biosynthesis via salvage pathway; AMP from ADP: step 1/1. Its function is as follows. Catalyzes the reversible transfer of the terminal phosphate group between ATP and AMP. Plays an important role in cellular energy homeostasis and in adenine nucleotide metabolism. In Mycobacterium sp. (strain MCS), this protein is Adenylate kinase.